The following is a 228-amino-acid chain: Transcription factor zip-11 (228 aa).

The segment at arginine 166 to arginine 202 is basic motif. A bZIP domain is found at arginine 166 to lysine 224. The leucine-zipper stretch occupies residues leucine 203–leucine 210.

It belongs to the bZIP family. In terms of assembly, interacts with CCAAT/enhancer-binding protein cebp-2.

It is found in the nucleus. In terms of biological role, transcription factor. Involved in modulating innate immune response pathways, acting to promote resistance against infection by Gram-negative bacterium P.aeruginosa strain PA14. May act as part of a feedback regulatory loop with the pmk-1/p38 MAPK pathway. May also function in concert with CCAAT/enhancer-binding protein cebp-2 to mediate immune responses, independently of the pmk-1/p38 MAPK pathway. The chain is Transcription factor zip-11 from Caenorhabditis elegans.